Reading from the N-terminus, the 402-residue chain is Flagellar hook protein FlgE (402 aa).

The protein belongs to the flagella basal body rod proteins family.

Its subcellular location is the bacterial flagellum basal body. The chain is Flagellar hook protein FlgE (flgE) from Escherichia coli (strain K12).